Reading from the N-terminus, the 492-residue chain is Steroid 21-hydroxylase (492 aa).

Residues Arg-91 and Lys-120 each contribute to the heme b site. Arg-231 contacts 17alpha-hydroxyprogesterone. Residue Arg-231 coordinates progesterone. Residues His-363, Arg-424, and Cys-426 each contribute to the heme b site.

It belongs to the cytochrome P450 family. Heme b is required as a cofactor.

Its subcellular location is the endoplasmic reticulum membrane. The protein resides in the microsome membrane. The catalysed reaction is 17alpha-hydroxyprogesterone + reduced [NADPH--hemoprotein reductase] + O2 = 11-deoxycortisol + oxidized [NADPH--hemoprotein reductase] + H2O + H(+). It carries out the reaction progesterone + reduced [NADPH--hemoprotein reductase] + O2 = 21-hydroxyprogesterone + oxidized [NADPH--hemoprotein reductase] + H2O + H(+). Its function is as follows. Specifically catalyzes the 21-hydroxylation of steroids. Required for the adrenal synthesis of mineralocorticoids and glucocorticoids. This is Steroid 21-hydroxylase (CYP21) from Lynx lynx (Eurasian lynx).